Reading from the N-terminus, the 513-residue chain is ATP synthase subunit alpha (513 aa).

Residue Gly-169 to Thr-176 coordinates ATP.

It belongs to the ATPase alpha/beta chains family. F-type ATPases have 2 components, CF(1) - the catalytic core - and CF(0) - the membrane proton channel. CF(1) has five subunits: alpha(3), beta(3), gamma(1), delta(1), epsilon(1). CF(0) has three main subunits: a(1), b(2) and c(9-12). The alpha and beta chains form an alternating ring which encloses part of the gamma chain. CF(1) is attached to CF(0) by a central stalk formed by the gamma and epsilon chains, while a peripheral stalk is formed by the delta and b chains.

The protein resides in the cell inner membrane. It carries out the reaction ATP + H2O + 4 H(+)(in) = ADP + phosphate + 5 H(+)(out). Functionally, produces ATP from ADP in the presence of a proton gradient across the membrane. The alpha chain is a regulatory subunit. The polypeptide is ATP synthase subunit alpha (Francisella tularensis subsp. novicida (strain U112)).